The chain runs to 218 residues: Ribosomal RNA small subunit methyltransferase G (218 aa).

S-adenosyl-L-methionine is bound by residues G82, L87, 137–138 (VE), and R152.

The protein belongs to the methyltransferase superfamily. RNA methyltransferase RsmG family.

It localises to the cytoplasm. The enzyme catalyses guanosine(527) in 16S rRNA + S-adenosyl-L-methionine = N(7)-methylguanosine(527) in 16S rRNA + S-adenosyl-L-homocysteine. Its function is as follows. Specifically methylates the N7 position of guanine in position 527 of 16S rRNA. The chain is Ribosomal RNA small subunit methyltransferase G from Herminiimonas arsenicoxydans.